A 173-amino-acid polypeptide reads, in one-letter code: RTX-III toxin-activating lysine-acyltransferase ApxIIC (173 aa).

Residues histidine 29 and aspartate 98 contribute to the active site.

The protein belongs to the RTX toxin acyltransferase family. Homodimer.

It is found in the cytoplasm. It catalyses the reaction a fatty acyl-[ACP] + L-lysyl-[protein] = N(6)-(fatty acyl)-L-lysyl-[protein] + holo-[ACP] + H(+). Functionally, protein-lysine acyltransferase that catalyzes fatty acylation of the protoxin, thereby converting it to the active toxin. The chain is RTX-III toxin-activating lysine-acyltransferase ApxIIC (apxIIIC) from Actinobacillus pleuropneumoniae (Haemophilus pleuropneumoniae).